We begin with the raw amino-acid sequence, 50 residues long: YVGQRLCGSQLVDTLYSVCKHRGFYRPSEGIVDQCCTNICSRNQLLTYCN.

3 disulfides stabilise this stretch: C7–C36, C19–C49, and C35–C40.

Belongs to the insulin family. As to quaternary structure, heterodimer of a B chain and an A chain linked by two disulfide bonds.

The protein localises to the secreted. In terms of biological role, insulin decreases blood glucose concentration. It increases cell permeability to monosaccharides, amino acids and fatty acids. It accelerates glycolysis, the pentose phosphate cycle, and glycogen synthesis in liver. The chain is Insulin (INS) from Proechimys guairae (Guaira spiny rat).